The primary structure comprises 78 residues: Major outer membrane lipoprotein Lpp (78 aa).

Residues 1–20 (MNRTKLVLGAVILGSTLLAG) form the signal peptide. Residue Cys21 is the site of N-palmitoyl cysteine attachment. The S-diacylglycerol cysteine moiety is linked to residue Cys21. 2 consecutive repeats follow at residues 24–34 (NAKIDQLSSDV) and 38–48 (NAKVDQLSNDV). Residues 27 to 75 (IDQLSSDVQTLNAKVDQLSNDVNAIRSDVQAAKDDAARANQRLDNQVRT) are a coiled coil. Lys78 is modified (N6-murein peptidoglycan lysine).

It belongs to the Lpp family. In terms of assembly, homotrimer.

Its subcellular location is the cell outer membrane. It is found in the secreted. The protein localises to the cell wall. Functionally, a highly abundant outer membrane lipoprotein that controls the distance between the inner and outer membranes. The only protein known to be covalently linked to the peptidoglycan network (PGN). Also non-covalently binds the PGN. The link between the cell outer membrane and PGN contributes to maintenance of the structural and functional integrity of the cell envelope, and maintains the correct distance between the PGN and the outer membrane. This Pectobacterium atrosepticum (strain SCRI 1043 / ATCC BAA-672) (Erwinia carotovora subsp. atroseptica) protein is Major outer membrane lipoprotein Lpp.